A 301-amino-acid polypeptide reads, in one-letter code: Glycine--tRNA ligase alpha subunit (301 aa).

It belongs to the class-II aminoacyl-tRNA synthetase family. Tetramer of two alpha and two beta subunits.

The protein resides in the cytoplasm. It catalyses the reaction tRNA(Gly) + glycine + ATP = glycyl-tRNA(Gly) + AMP + diphosphate. This is Glycine--tRNA ligase alpha subunit from Pseudoalteromonas atlantica (strain T6c / ATCC BAA-1087).